Reading from the N-terminus, the 296-residue chain is Cytidine deaminase (296 aa).

CMP/dCMP-type deaminase domains lie at 48 to 168 (DVDA…FGPV) and 187 to 296 (QNVN…FIEE). 89–91 (NME) provides a ligand contact to substrate. Position 102 (His102) interacts with Zn(2+). Glu104 (proton donor) is an active-site residue. Cys129 and Cys132 together coordinate Zn(2+).

The protein belongs to the cytidine and deoxycytidylate deaminase family. Homodimer. Zn(2+) serves as cofactor.

It carries out the reaction cytidine + H2O + H(+) = uridine + NH4(+). The catalysed reaction is 2'-deoxycytidine + H2O + H(+) = 2'-deoxyuridine + NH4(+). In terms of biological role, this enzyme scavenges exogenous and endogenous cytidine and 2'-deoxycytidine for UMP synthesis. The sequence is that of Cytidine deaminase from Pectobacterium atrosepticum (strain SCRI 1043 / ATCC BAA-672) (Erwinia carotovora subsp. atroseptica).